Consider the following 181-residue polypeptide: Large ribosomal subunit protein uL5 (181 aa).

This sequence belongs to the universal ribosomal protein uL5 family. Part of the 50S ribosomal subunit; part of the 5S rRNA/L5/L18/L25 subcomplex. Contacts the 5S rRNA and the P site tRNA. Forms a bridge to the 30S subunit in the 70S ribosome.

Functionally, this is one of the proteins that bind and probably mediate the attachment of the 5S RNA into the large ribosomal subunit, where it forms part of the central protuberance. In the 70S ribosome it contacts protein S13 of the 30S subunit (bridge B1b), connecting the 2 subunits; this bridge is implicated in subunit movement. Contacts the P site tRNA; the 5S rRNA and some of its associated proteins might help stabilize positioning of ribosome-bound tRNAs. The chain is Large ribosomal subunit protein uL5 from Helicobacter pylori (strain ATCC 700392 / 26695) (Campylobacter pylori).